A 434-amino-acid chain; its full sequence is MSIITDVLAREVLDSRGNPTVEVELYTEDGGFGRALVPSGASTGEHEAVELRDGDKDRFGGKGVLKAVGHVNNEIAKAVIGHDVTEQRLIDQTMIDLDGTPNKGKFGANAILGVSLAAARAAADEVGLPLYQYLGGPNAHVLPTPMMNVLNGGAHSTNTVDFQEFMIMPVGAKSVREAVRMGSETFHALQALLKSKGDITAVGDEGGFAPNLKDNEEAFELLVEAIKKAGYKPGDDIALAFDVAASEMYDAESKTYTTKWSNPDKKYTTEEWTDMIDGYINKYPIVSVEDPIDENDWEGWQTFTKKMGDKVQIVGDDLFVTNTDYLKKGIDMGVANSILIKLNQIGTLTETFEAIEMAKEAGYTAVVSHRSGETEDTTIADLVVATNAGQIKTGSMSRTDRIAKYNQLMRIEDQLGAQSLYKGRKSFYNVKAID.

Gln-163 serves as a coordination point for (2R)-2-phosphoglycerate. The active-site Proton donor is the Glu-205. Residues Asp-242, Glu-289, and Asp-316 each coordinate Mg(2+). (2R)-2-phosphoglycerate contacts are provided by Lys-341, Arg-370, Ser-371, and Lys-392. The Proton acceptor role is filled by Lys-341.

This sequence belongs to the enolase family. Mg(2+) serves as cofactor.

It localises to the cytoplasm. The protein resides in the secreted. The protein localises to the cell surface. The enzyme catalyses (2R)-2-phosphoglycerate = phosphoenolpyruvate + H2O. The protein operates within carbohydrate degradation; glycolysis; pyruvate from D-glyceraldehyde 3-phosphate: step 4/5. Functionally, catalyzes the reversible conversion of 2-phosphoglycerate (2-PG) into phosphoenolpyruvate (PEP). It is essential for the degradation of carbohydrates via glycolysis. In Lacticaseibacillus casei (strain BL23) (Lactobacillus casei), this protein is Enolase.